The primary structure comprises 542 residues: Thermosome subunit alpha (542 aa).

It belongs to the TCP-1 chaperonin family. As to quaternary structure, forms a Heterooligomeric complex of two stacked eight-membered rings.

Molecular chaperone; binds unfolded polypeptides in vitro, and has a weak ATPase activity. In Methanothermobacter thermautotrophicus (strain ATCC 29096 / DSM 1053 / JCM 10044 / NBRC 100330 / Delta H) (Methanobacterium thermoautotrophicum), this protein is Thermosome subunit alpha (thsA).